Here is a 236-residue protein sequence, read N- to C-terminus: tRNA1(Val) (adenine(37)-N6)-methyltransferase (236 aa).

Belongs to the methyltransferase superfamily. tRNA (adenine-N(6)-)-methyltransferase family.

It localises to the cytoplasm. It carries out the reaction adenosine(37) in tRNA1(Val) + S-adenosyl-L-methionine = N(6)-methyladenosine(37) in tRNA1(Val) + S-adenosyl-L-homocysteine + H(+). In terms of biological role, specifically methylates the adenine in position 37 of tRNA(1)(Val) (anticodon cmo5UAC). This Histophilus somni (strain 129Pt) (Haemophilus somnus) protein is tRNA1(Val) (adenine(37)-N6)-methyltransferase.